Here is a 69-residue protein sequence, read N- to C-terminus: UPF0150 protein ssr1258 (69 aa).

It belongs to the UPF0150 family.

The polypeptide is UPF0150 protein ssr1258 (Synechocystis sp. (strain ATCC 27184 / PCC 6803 / Kazusa)).